We begin with the raw amino-acid sequence, 251 residues long: Spermatogenesis-associated protein 46 (251 aa).

Its subcellular location is the nucleus membrane. Its function is as follows. Plays a role in spermiogenesis and fertilization. The chain is Spermatogenesis-associated protein 46 (SPATA46) from Macaca fascicularis (Crab-eating macaque).